The chain runs to 460 residues: Cysteine--tRNA ligase (460 aa).

A Zn(2+)-binding site is contributed by C29. The short motif at 31–41 (ATPQSSPHIGH) is the 'HIGH' region element. Residues C212, H237, and E241 each coordinate Zn(2+). The short motif at 268–272 (KMSKS) is the 'KMSKS' region element. Residue K271 participates in ATP binding.

It belongs to the class-I aminoacyl-tRNA synthetase family. As to quaternary structure, monomer. Requires Zn(2+) as cofactor.

It is found in the cytoplasm. It carries out the reaction tRNA(Cys) + L-cysteine + ATP = L-cysteinyl-tRNA(Cys) + AMP + diphosphate. The chain is Cysteine--tRNA ligase from Corynebacterium glutamicum (strain R).